The primary structure comprises 409 residues: Probable ferredoxin reductase CtmF (409 aa).

FAD contacts are provided by alanine 15, aspartate 37, lysine 50, valine 83, aspartate 279, and valine 298.

This sequence belongs to the FAD-dependent oxidoreductase family. FAD is required as a cofactor.

Its pathway is terpene metabolism; monoterpene degradation. In terms of biological role, involved in the degradation of the cyclic monoterpene limonene. Probably part of an electron transfer system involved in the oxidation of limonene to perillyl alcohol. This is Probable ferredoxin reductase CtmF from Castellaniella defragrans (strain DSM 12143 / CCUG 39792 / 65Phen) (Alcaligenes defragrans).